Consider the following 510-residue polypeptide: tRNA-2-methylthio-N(6)-dimethylallyladenosine synthase (510 aa).

Residues 19–144 (RTYQVRTFGC…LPVLLERARH (126 aa)) form the MTTase N-terminal domain. The [4Fe-4S] cluster site is built by Cys-28, Cys-73, Cys-107, Cys-181, Cys-185, and Cys-188. In terms of domain architecture, Radical SAM core spans 167–397 (RESPYAAWVS…TALQDRITYE (231 aa)). Residues 400-470 (QAQTGRTLEV…PHYLEADDVS (71 aa)) form the TRAM domain. Residues 482–492 (AWEARQARPEP) show a composition bias toward basic and acidic residues. The segment at 482-510 (AWEARQARPEPESTGPRPVGLGLPTLRRA) is disordered.

The protein belongs to the methylthiotransferase family. MiaB subfamily. Monomer. The cofactor is [4Fe-4S] cluster.

Its subcellular location is the cytoplasm. The catalysed reaction is N(6)-dimethylallyladenosine(37) in tRNA + (sulfur carrier)-SH + AH2 + 2 S-adenosyl-L-methionine = 2-methylsulfanyl-N(6)-dimethylallyladenosine(37) in tRNA + (sulfur carrier)-H + 5'-deoxyadenosine + L-methionine + A + S-adenosyl-L-homocysteine + 2 H(+). In terms of biological role, catalyzes the methylthiolation of N6-(dimethylallyl)adenosine (i(6)A), leading to the formation of 2-methylthio-N6-(dimethylallyl)adenosine (ms(2)i(6)A) at position 37 in tRNAs that read codons beginning with uridine. The protein is tRNA-2-methylthio-N(6)-dimethylallyladenosine synthase of Kineococcus radiotolerans (strain ATCC BAA-149 / DSM 14245 / SRS30216).